Consider the following 380-residue polypeptide: cAMP-dependent protein kinase type I-alpha regulatory subunit (380 aa).

M1 is modified (N-acetylmethionine). Residue A2 is modified to N-acetylalanine; in cAMP-dependent protein kinase type I-alpha regulatory subunit, N-terminally processed. A dimerization and phosphorylation region spans residues 2–135 (ASGTTASEEE…ALAKAIEKNV (134 aa)). Residues S3, S76, and S82 each carry the phosphoserine modification. Residues 64–96 (IQNLQKAGSRADSREDEISPPPPNPVVKGRRRR) are disordered. Positions 95 to 99 (RRGAI) match the Pseudophosphorylation motif motif. S100 carries the phosphoserine modification. Residues 136 to 253 (LFSH…SKVS), E201, R210, 254 to 380 (ILES…SLSV), E325, and R334 each bind 3',5'-cyclic AMP. Phosphoserine is present on S257.

The protein belongs to the cAMP-dependent kinase regulatory chain family. In terms of assembly, the inactive holoenzyme is composed of two regulatory chains and two catalytic chains. Activation by cAMP releases the two active catalytic monomers and the regulatory dimer. Interacts with PRKACA and PRKACB. PRKAR1A also interacts with RFC2; the complex may be involved in cell survival. Interacts with AKAP4. Interacts with RARA; the interaction occurs in the presence of cAMP or FSH and regulates RARA transcriptional activity. Interacts with the phosphorylated form of PJA2. Interacts with CBFA2T3. Interacts with PRKX; regulates this cAMP-dependent protein kinase. Interacts with smAKAP; this interaction may target PRKAR1A to the plasma membrane. Interacts with AICDA. The pseudophosphorylation site binds to the substrate-binding region of the catalytic chain, resulting in the inhibition of its activity. The physiological significance of the in vitro phosphorylation of a proximal serine is unclear. In terms of tissue distribution, four types of regulatory chains are found: I-alpha, I-beta, II-alpha, and II-beta. Their expression varies among tissues and is in some cases constitutive and in others inducible.

The protein resides in the cell membrane. Functionally, regulatory subunit of the cAMP-dependent protein kinases involved in cAMP signaling in cells. The chain is cAMP-dependent protein kinase type I-alpha regulatory subunit (PRKAR1A) from Bos taurus (Bovine).